Consider the following 682-residue polypeptide: Protein SYG1 homolog (682 aa).

One can recognise an SPX domain in the interval 1–219; that stretch reads MKFGKVIEGQ…HTDLQGFWVD (219 aa). The Cytoplasmic segment spans residues 1–274; it reads MKFGKVIEGQ…KEHFSANSMR (274 aa). Residues 275-295 traverse the membrane as a helical segment; the sequence is FGLLFGAGLPLAIEAACYYNA. The Extracellular portion of the chain corresponds to 296-300; that stretch reads TEQSS. A helical membrane pass occupies residues 301–321; that stretch reads YLLQIWGGFFLVIFAFVLFDL. Topologically, residues 322–348 are cytoplasmic; it reads DCYVWEKTRVNYMLIFEFNQRKSLNWR. Residues 349–369 traverse the membrane as a helical segment; it reads QHLEIVGAVFFIFSLFFFLCM. The Extracellular portion of the chain corresponds to 370 to 377; sequence RNFFPGFT. The helical transmembrane segment at 378–398 threads the bilayer; sequence IYFPALFLGVVGTFLIAPVIV. At 399-406 the chain is on the cytoplasmic side; the sequence is PYWRMRRY. The helical transmembrane segment at 407–424 threads the bilayer; that stretch reads LIIQLIRVFLSGLSTVHF. Residues 425–426 lie on the Extracellular side of the membrane; it reads QD. A helical membrane pass occupies residues 427 to 447; sequence FFFADQMVSLTYACGNISLFF. At 448 to 525 the chain is on the cytoplasmic side; sequence CLYKRLWRQP…WRIHPGLKYR (78 aa). The 196-residue stretch at 459–654 folds into the EXS domain; that stretch reads LCNSSHSPLL…VKPHSDVFVS (196 aa). The helical transmembrane segment at 526–546 threads the bilayer; sequence VLYTIFAGVNSLFSYTWDILM. The Extracellular portion of the chain corresponds to 547–571; it reads DWNLLVRKDGRWQFREHRILKQLWP. The chain crosses the membrane as a helical span at residues 572–592; sequence YIIAMILNFIVRSSFIFYCIF. Residues 593–682 lie on the Cytoplasmic side of the membrane; sequence PNHIQHSSGI…QTDVDEAQFS (90 aa). Positions 659 to 682 are disordered; sequence SDKNYTDDEDSMDDQTDVDEAQFS. Acidic residues predominate over residues 665–682; sequence DDEDSMDDQTDVDEAQFS.

This sequence belongs to the SYG1 (TC 2.A.94) family.

The protein localises to the cell membrane. May function in G-protein coupled signal transduction. This chain is Protein SYG1 homolog, found in Schizosaccharomyces pombe (strain 972 / ATCC 24843) (Fission yeast).